We begin with the raw amino-acid sequence, 859 residues long: Rod cGMP-specific 3',5'-cyclic phosphodiesterase subunit alpha (859 aa).

Residue Gly-2 is modified to N-acetylglycine. 2 consecutive GAF domains span residues Gln-73–Met-222 and Asp-254–Val-431. A PDEase domain is found at Glu-483–Tyr-816. The active-site Proton donor is the His-559. The a divalent metal cation site is built by His-563, His-599, Asp-600, and Asp-720. The segment at Lys-821–Gln-859 is disordered. The segment covering Gln-830 to Ser-840 has biased composition (low complexity). Gly residues predominate over residues Gln-841–Pro-851. Cys-856 carries the post-translational modification Cysteine methyl ester. Cys-856 is lipidated: S-farnesyl cysteine. Residues Cys-857–Gln-859 constitute a propeptide, removed in mature form.

This sequence belongs to the cyclic nucleotide phosphodiesterase family. Oligomer composed of two catalytic chains (alpha and beta), an inhibitory chain (gamma) and the delta chain. A divalent metal cation serves as cofactor.

It localises to the cell membrane. It is found in the cell projection. Its subcellular location is the cilium. The protein resides in the photoreceptor outer segment. The enzyme catalyses 3',5'-cyclic GMP + H2O = GMP + H(+). Rod-specific cGMP phosphodiesterase that catalyzes the hydrolysis of 3',5'-cyclic GMP. This protein participates in processes of transmission and amplification of the visual signal. The polypeptide is Rod cGMP-specific 3',5'-cyclic phosphodiesterase subunit alpha (Bos taurus (Bovine)).